The chain runs to 292 residues: NAD kinase (292 aa).

Catalysis depends on aspartate 72, which acts as the Proton acceptor. Residues 72 to 73 (DG), 146 to 147 (NE), histidine 157, arginine 174, aspartate 176, and 187 to 192 (TAYALS) each bind NAD(+).

This sequence belongs to the NAD kinase family. Requires a divalent metal cation as cofactor.

The protein resides in the cytoplasm. The enzyme catalyses NAD(+) + ATP = ADP + NADP(+) + H(+). In terms of biological role, involved in the regulation of the intracellular balance of NAD and NADP, and is a key enzyme in the biosynthesis of NADP. Catalyzes specifically the phosphorylation on 2'-hydroxyl of the adenosine moiety of NAD to yield NADP. The sequence is that of NAD kinase from Shewanella oneidensis (strain ATCC 700550 / JCM 31522 / CIP 106686 / LMG 19005 / NCIMB 14063 / MR-1).